Here is a 164-residue protein sequence, read N- to C-terminus: UPF0262 protein Nham_0287 (164 aa).

The protein belongs to the UPF0262 family.

The sequence is that of UPF0262 protein Nham_0287 from Nitrobacter hamburgensis (strain DSM 10229 / NCIMB 13809 / X14).